A 267-amino-acid chain; its full sequence is Thiazole synthase (267 aa).

Lys-107 acts as the Schiff-base intermediate with DXP in catalysis. 1-deoxy-D-xylulose 5-phosphate is bound by residues Gly-168, 194-195 (AG), and 216-217 (NT).

Belongs to the ThiG family. In terms of assembly, homotetramer. Forms heterodimers with either ThiH or ThiS.

The protein localises to the cytoplasm. It catalyses the reaction [ThiS sulfur-carrier protein]-C-terminal-Gly-aminoethanethioate + 2-iminoacetate + 1-deoxy-D-xylulose 5-phosphate = [ThiS sulfur-carrier protein]-C-terminal Gly-Gly + 2-[(2R,5Z)-2-carboxy-4-methylthiazol-5(2H)-ylidene]ethyl phosphate + 2 H2O + H(+). It functions in the pathway cofactor biosynthesis; thiamine diphosphate biosynthesis. In terms of biological role, catalyzes the rearrangement of 1-deoxy-D-xylulose 5-phosphate (DXP) to produce the thiazole phosphate moiety of thiamine. Sulfur is provided by the thiocarboxylate moiety of the carrier protein ThiS. In vitro, sulfur can be provided by H(2)S. This chain is Thiazole synthase, found in Aquifex aeolicus (strain VF5).